We begin with the raw amino-acid sequence, 135 residues long: RxLR effector protein Avr10 (135 aa).

The first 19 residues, 1–19 (MRLSFIIFAISLLAGGSGA), serve as a signal peptide directing secretion. A compositionally biased stretch (polar residues) spans 34-43 (GTNQGASTGK). Residues 34–64 (GTNQGASTGKRSLRYDNNAERAGEEDDEERA) are disordered. Residues 44-63 (RSLRYDNNAERAGEEDDEER) carry the RxLR-dEER motif. Basic and acidic residues predominate over residues 46–55 (LRYDNNAERA).

This sequence belongs to the RxLR effector family.

Its subcellular location is the secreted. It localises to the host nucleus. The protein resides in the host cytoplasm. Functionally, secreted effector that acts as an elicitor of hypersensitive response (HR) specifically on plants carrying defense protein R10. Enhances P.infestans colonization of Nicotiana benthamiana leaves. The polypeptide is RxLR effector protein Avr10 (Phytophthora infestans (strain T30-4) (Potato late blight agent)).